The chain runs to 322 residues: Arginase-1 (322 aa).

A disordered region spans residues 1-27; it reads MSFKSQSIGIIGAPFSKGQPRGGVEEG. At Ser-7 the chain carries Phosphoserine. Lys-17 bears the N6-succinyllysine mark. Ser-72 carries the phosphoserine modification. Lys-75 is modified (N6-succinyllysine). Positions 101, 124, 126, and 128 each coordinate Mn(2+). Substrate-binding positions include 126–130 and 137–139; these read HTDIN and TGN. Phosphoserine is present on Ser-163. Asp-183 lines the substrate pocket. Ser-217 bears the Phosphoserine mark. Residues Asp-232 and Asp-234 each coordinate Mn(2+). Substrate-binding residues include Thr-246 and Glu-277.

Belongs to the arginase family. Homotrimer. Interacts with CMTM6. Requires Mn(2+) as cofactor.

The protein localises to the cytoplasm. It catalyses the reaction L-arginine + H2O = urea + L-ornithine. It participates in nitrogen metabolism; urea cycle; L-ornithine and urea from L-arginine: step 1/1. In Sus scrofa (Pig), this protein is Arginase-1 (ARG1).